The primary structure comprises 259 residues: UPF0246 protein VSAL_I2547 (259 aa).

It belongs to the UPF0246 family.

In Aliivibrio salmonicida (strain LFI1238) (Vibrio salmonicida (strain LFI1238)), this protein is UPF0246 protein VSAL_I2547.